We begin with the raw amino-acid sequence, 408 residues long: Exodeoxyribonuclease 7 large subunit (408 aa).

Belongs to the XseA family. In terms of assembly, heterooligomer composed of large and small subunits.

Its subcellular location is the cytoplasm. It catalyses the reaction Exonucleolytic cleavage in either 5'- to 3'- or 3'- to 5'-direction to yield nucleoside 5'-phosphates.. Functionally, bidirectionally degrades single-stranded DNA into large acid-insoluble oligonucleotides, which are then degraded further into small acid-soluble oligonucleotides. The sequence is that of Exodeoxyribonuclease 7 large subunit from Alkaliphilus oremlandii (strain OhILAs) (Clostridium oremlandii (strain OhILAs)).